Reading from the N-terminus, the 246-residue chain is Exosome complex component Rrp41 (246 aa).

It belongs to the RNase PH family. Rrp41 subfamily. In terms of assembly, component of the archaeal exosome complex. Forms a hexameric ring-like arrangement composed of 3 Rrp41-Rrp42 heterodimers. The hexameric ring associates with a trimer of Rrp4 and/or Csl4 subunits.

It is found in the cytoplasm. Catalytic component of the exosome, which is a complex involved in RNA degradation. Has 3'-&gt;5' exoribonuclease activity. Can also synthesize heteromeric RNA-tails. The chain is Exosome complex component Rrp41 from Pyrobaculum islandicum (strain DSM 4184 / JCM 9189 / GEO3).